Here is a 147-residue protein sequence, read N- to C-terminus: Hemoglobin subunit beta-1 (147 aa).

The residue at position 2 (V2) is an N-acetylvaline. Positions 3-147 (HLTDAEKAAV…VASALAHKYH (145 aa)) constitute a Globin domain. K18 carries the post-translational modification N6-succinyllysine. Phosphoserine occurs at positions 45, 51, and 53. K60 is subject to N6-succinyllysine. Heme b is bound by residues H64 and H93. Position 105 is an asymmetric dimethylarginine (R105). T124 is modified (phosphothreonine).

It belongs to the globin family. Heterotetramer of two alpha chains and two beta chains. Red blood cells.

In terms of biological role, involved in oxygen transport from the lung to the various peripheral tissues. The protein is Hemoglobin subunit beta-1 (Hbb) of Rattus norvegicus (Rat).